Reading from the N-terminus, the 397-residue chain is Guanine nucleotide-binding protein G(s) subunit alpha (397 aa).

The interval 1–23 (MGCLGNSKTEDQRNEEKAQREAN) is disordered. A lipid anchor (N-palmitoyl glycine) is attached at Gly-2. Cys-3 is lipidated: S-palmitoyl cysteine. Over residues 8-23 (KTEDQRNEEKAQREAN) the composition is skewed to basic and acidic residues. The G-alpha domain occupies 39 to 397 (ATHRLLLLGA…RMHLRQYELL (359 aa)). The G1 motif stretch occupies residues 42–55 (RLLLLGAGESGKST). GTP is bound by residues 47-55 (GAGESGKST), 182-189 (LLRCRVLT), 208-212 (DVGGQ), 277-280 (NKQD), and Ala-369. Mg(2+)-binding residues include Ser-54 and Thr-189. The tract at residues 181-189 (DLLRCRVLT) is G2 motif. The segment at 204–213 (FHMFDVGGQR) is G3 motif. Residues 273–280 (ILFLNKQD) are G4 motif. A G5 motif region spans residues 367–372 (TCAVDT).

This sequence belongs to the G-alpha family. G(s) subfamily. In terms of assembly, heterotrimeric G proteins are composed of 3 units; alpha, beta and gamma. The alpha chain contains the guanine nucleotide binding site. Interacts with CRY1; the interaction may block GPCR-mediated regulation of cAMP concentrations. Interacts with ADCY6 and stimulates its adenylyl cyclase activity. Interacts with ADCY2 and ADCY5. Stimulates the ADCY5 adenylyl cyclase activity. Interaction with SASH1.

It is found in the cell membrane. Guanine nucleotide-binding proteins (G proteins) function as transducers in numerous signaling pathways controlled by G protein-coupled receptors (GPCRs). Signaling involves the activation of adenylyl cyclases, resulting in increased levels of the signaling molecule cAMP. GNAS functions downstream of several GPCRs, including beta-adrenergic receptors. Stimulates the Ras signaling pathway via RAPGEF2. This is Guanine nucleotide-binding protein G(s) subunit alpha (GNAS) from Sus scrofa (Pig).